The chain runs to 338 residues: Aspartate--ammonia ligase (338 aa).

The protein belongs to the class-II aminoacyl-tRNA synthetase family. AsnA subfamily.

Its subcellular location is the cytoplasm. It catalyses the reaction L-aspartate + NH4(+) + ATP = L-asparagine + AMP + diphosphate + H(+). Its pathway is amino-acid biosynthesis; L-asparagine biosynthesis; L-asparagine from L-aspartate (ammonia route): step 1/1. The protein is Aspartate--ammonia ligase of Lactobacillus delbrueckii subsp. bulgaricus (strain ATCC BAA-365 / Lb-18).